The following is a 154-amino-acid chain: Transcriptional repressor NrdR (154 aa).

Residues 3–34 fold into a zinc finger; sequence CPHCHKNGSRVVDSRPSEDGSFIRRRRECIHC. The 91-residue stretch at 49–139 folds into the ATP-cone domain; that stretch reads LLVIKKDGTR…VYRQFKDVDA (91 aa).

The protein belongs to the NrdR family. It depends on Zn(2+) as a cofactor.

Its function is as follows. Negatively regulates transcription of bacterial ribonucleotide reductase nrd genes and operons by binding to NrdR-boxes. In Limosilactobacillus reuteri (strain DSM 20016) (Lactobacillus reuteri), this protein is Transcriptional repressor NrdR.